The primary structure comprises 283 residues: Tetrahydroxynaphthalene reductase (283 aa).

Positions 1 to 21 are disordered; it reads MPAVTQPRGESKYDAIPGPLG. 39 to 63 provides a ligand contact to NADP(+); it reads RGIGREMAMELGRRGCKVIVNYANS. Ser164 contributes to the substrate binding site. Catalysis depends on Tyr178, which acts as the Proton acceptor.

This sequence belongs to the short-chain dehydrogenases/reductases (SDR) family. In terms of assembly, homotetramer.

It carries out the reaction scytalone + NADP(+) = naphthalene-1,3,6,8-tetrol + NADPH + H(+). It participates in pigment biosynthesis; melanin biosynthesis. Its function is as follows. Catalyzes the NADPH-dependent reduction of 1,3,6,8-tetrahydroxynaphthalene (T4HN) into (+)-scytalone and 1,3,8-trihydroxynaphthalene into (-)-vermelone. This enzyme is the biochemical target of several commercially important fungicides which are used to prevent blast disease in rice plants. This Pyricularia oryzae (strain 70-15 / ATCC MYA-4617 / FGSC 8958) (Rice blast fungus) protein is Tetrahydroxynaphthalene reductase.